We begin with the raw amino-acid sequence, 149 residues long: Urease accessory protein UreE (149 aa).

This sequence belongs to the UreE family.

It is found in the cytoplasm. Involved in urease metallocenter assembly. Binds nickel. Probably functions as a nickel donor during metallocenter assembly. In Ureaplasma urealyticum serovar 10 (strain ATCC 33699 / Western), this protein is Urease accessory protein UreE.